The chain runs to 293 residues: Pyridoxal 5'-phosphate synthase subunit PdxS (293 aa).

Aspartate 23 lines the D-ribose 5-phosphate pocket. The Schiff-base intermediate with D-ribose 5-phosphate role is filled by lysine 80. Residue glycine 152 coordinates D-ribose 5-phosphate. D-glyceraldehyde 3-phosphate is bound at residue arginine 164. D-ribose 5-phosphate is bound by residues glycine 213 and glycine 234–serine 235.

Belongs to the PdxS/SNZ family. In the presence of PdxT, forms a dodecamer of heterodimers.

The catalysed reaction is aldehydo-D-ribose 5-phosphate + D-glyceraldehyde 3-phosphate + L-glutamine = pyridoxal 5'-phosphate + L-glutamate + phosphate + 3 H2O + H(+). Its pathway is cofactor biosynthesis; pyridoxal 5'-phosphate biosynthesis. In terms of biological role, catalyzes the formation of pyridoxal 5'-phosphate from ribose 5-phosphate (RBP), glyceraldehyde 3-phosphate (G3P) and ammonia. The ammonia is provided by the PdxT subunit. Can also use ribulose 5-phosphate and dihydroxyacetone phosphate as substrates, resulting from enzyme-catalyzed isomerization of RBP and G3P, respectively. The polypeptide is Pyridoxal 5'-phosphate synthase subunit PdxS (Chloroflexus aggregans (strain MD-66 / DSM 9485)).